The primary structure comprises 35 residues: Potassium channel toxin alpha-KTx 6.1 (35 aa).

4 disulfides stabilise this stretch: Cys-4-Cys-25, Cys-10-Cys-30, Cys-14-Cys-32, and Cys-20-Cys-35.

It belongs to the short scorpion toxin superfamily. Potassium channel inhibitor family. Alpha-KTx 06 subfamily. As to expression, expressed by the venom gland.

It localises to the secreted. Potently and reversibly inhibits the insect voltage-gated Shaker (Sh) potassium channel (isoform alpha (B)), the mammalian voltage-gated potassium channels Kv1.2/KCNA2 (IC(50)=0.44 nM), and the calcium-activated potassium channel KCa2.3/KCNN3 (Kd=330 nM). Its effect on Kv1.3/KCNA3 is controversial, since this channel is voltage-independently inhibited in PubMed:9464266, but is not affected in PubMed:10931199. Furthermore, this toxin competes with apamin (a small conductance calcium-activated potassium channel inhibitor) for binding to rat brain synaptosomes. This chain is Potassium channel toxin alpha-KTx 6.1, found in Pandinus imperator (Emperor scorpion).